The chain runs to 425 residues: MYVSNLRLSNYRSWEELDLQLSPGITIFSGPNGHGKTNIVEALGYLAHLSSHRVNSDAALVRRGEEIANISATAVNNGRELTAHLAIRARGSNRAHINRAAMNSQRDLLGVVRTTLFSPEDLALIRGEPEQRRHFLDAIMVARYPRLAAVKADYDKALRQRNALLRQSAFALRLVVGAPKGASHNLSEDIKADAESALATLDVWDSQLAALGAQIMSARVQIVHDLAPHLQQTYQSLAPQSRPAHMSYTSTIDVELADLGIRLGVSEPNQPTALLSPEIAEATLLQAFANKRPQEVERGTTLLGPHRDDVNLILGHQPAKGYASHGESWSFALSLRLAAFFMQRGDGVEPVVILDDVFAELDSSRRQHLVDLISSAEQVLITAAVDEDIPEALRDVAKIYTIDELKNSALSTAERAVKDGEADGD.

Gly-30–Thr-37 contacts ATP.

This sequence belongs to the RecF family.

It localises to the cytoplasm. In terms of biological role, the RecF protein is involved in DNA metabolism; it is required for DNA replication and normal SOS inducibility. RecF binds preferentially to single-stranded, linear DNA. It also seems to bind ATP. The protein is DNA replication and repair protein RecF of Corynebacterium jeikeium (strain K411).